Consider the following 664-residue polypeptide: Lamin tail domain-containing protein 2 (664 aa).

A disordered region spans residues 1–40 (MAPKSCQESEDKQVSPAPAGVQPDSSDLGSPVGTPVDRVA). A coiled-coil region spans residues 118 to 169 (QDKFLRNQVQKLTLELKAQKEQAQQEKQQLEEKLQQNLWAKQQLEAELQTFQ). Polar residues predominate over residues 245–260 (SDQKQSQPPTSETYTL). 2 disordered regions span residues 245-272 (SDQK…TEKP) and 286-329 (TSSS…MQEH). A compositionally biased stretch (low complexity) spans 286–298 (TSSSERTQSDTSS). A compositionally biased stretch (polar residues) spans 312-325 (GHPSQGTNLASSEQ). The LTD domain maps to 362–481 (PYTRPQLNPF…QVLSEHQATP (120 aa)). The segment at 504–563 (SESEPDVHPGEQQCRPSSPQKGRAKDAGARRKKPGPGVRQHRHSSTSGLRASRTLHPTET) is disordered. Residues 533–547 (RRKKPGPGVRQHRHS) are compositionally biased toward basic residues.

The sequence is that of Lamin tail domain-containing protein 2 (Lmntd2) from Mus musculus (Mouse).